A 202-amino-acid polypeptide reads, in one-letter code: LexA repressor (202 aa).

The segment at residues 28-47 (IREIGDQFGITAKGAYDHLK) is a DNA-binding region (H-T-H motif). Active-site for autocatalytic cleavage activity residues include serine 126 and lysine 163.

It belongs to the peptidase S24 family. As to quaternary structure, homodimer.

It catalyses the reaction Hydrolysis of Ala-|-Gly bond in repressor LexA.. Represses a number of genes involved in the response to DNA damage (SOS response), including recA and lexA. In the presence of single-stranded DNA, RecA interacts with LexA causing an autocatalytic cleavage which disrupts the DNA-binding part of LexA, leading to derepression of the SOS regulon and eventually DNA repair. The sequence is that of LexA repressor from Leptospira biflexa serovar Patoc (strain Patoc 1 / Ames).